A 295-amino-acid chain; its full sequence is Transcription factor bHLH19 (295 aa).

The bHLH domain occupies Val115–Leu164.

As to quaternary structure, homodimer. Expressed in roots and leaves.

It is found in the nucleus. This is Transcription factor bHLH19 (BHLH19) from Arabidopsis thaliana (Mouse-ear cress).